The sequence spans 205 residues: MSVMSYNGGAVMAMKGKNCVAIAADRRFGIQAQMVTTDFQKIFPMGDRLYIGLAGLATDVQTVAQRLKFRLNLYELKEGRQIKPYTLMSMVANLLYEKRFGPYYTEPVIAGLDPKTFKPFICSLDLIGCPMVTDDFVVSGTCSEQMYGMCESLWEPNMDPEHLFETISQAMLNAVDRDAVSGMGVIVHIIEKDKITTRTLKARMD.

Serine 2 is subject to N-acetylserine. The residue at position 77 (lysine 77) is an N6-acetyllysine.

It belongs to the peptidase T1B family. As to quaternary structure, the 26S proteasome consists of a 20S proteasome core and two 19S regulatory subunits. The 20S proteasome core is a barrel-shaped complex made of 28 subunits that are arranged in four stacked rings. The two outer rings are each formed by seven alpha subunits, and the two inner rings are formed by seven beta subunits. The proteolytic activity is exerted by three beta-subunits PSMB5, PSMB6 and PSMB7.

The protein resides in the cytoplasm. Its subcellular location is the nucleus. In terms of biological role, non-catalytic component of the 20S core proteasome complex involved in the proteolytic degradation of most intracellular proteins. This complex plays numerous essential roles within the cell by associating with different regulatory particles. Associated with two 19S regulatory particles, forms the 26S proteasome and thus participates in the ATP-dependent degradation of ubiquitinated proteins. The 26S proteasome plays a key role in the maintenance of protein homeostasis by removing misfolded or damaged proteins that could impair cellular functions, and by removing proteins whose functions are no longer required. Associated with the PA200 or PA28, the 20S proteasome mediates ubiquitin-independent protein degradation. This type of proteolysis is required in several pathways including spermatogenesis (20S-PA200 complex) or generation of a subset of MHC class I-presented antigenic peptides (20S-PA28 complex). This is Proteasome subunit beta type-3 (Psmb3) from Rattus norvegicus (Rat).